The chain runs to 1099 residues: Carbamoyl phosphate synthase large chain (1099 aa).

The tract at residues 1 to 402 (MPKREDIKRI…ALGKALRSLE (402 aa)) is carboxyphosphate synthetic domain. The ATP site is built by Arg129, Arg169, Gly175, Gly176, Glu208, Val210, Glu215, Gly241, Ile242, His243, Gln285, and Glu299. The ATP-grasp 1 domain occupies 133 to 328 (KETMEKAGLE…IAKVAALLAV (196 aa)). Mg(2+)-binding residues include Gln285, Glu299, and Asn301. Residues Gln285, Glu299, and Asn301 each coordinate Mn(2+). An oligomerization domain region spans residues 403–541 (LDAAPKLDLE…STYNGVENEA (139 aa)). Residues 542 to 944 (VPSDREKIMI…AFAKAQIAAG (403 aa)) are carbamoyl phosphate synthetic domain. Residues 666–857 (AKLLKQIGLK…VARIAAKIMV (192 aa)) form the ATP-grasp 2 domain. ATP contacts are provided by Arg702, Lys741, Leu743, Glu748, Gly773, Val774, His775, Ser776, Gln816, and Glu828. The Mg(2+) site is built by Gln816, Glu828, and Asn830. Residues Gln816, Glu828, and Asn830 each coordinate Mn(2+). The region spanning 945 to 1099 (NPLPTTGAIL…VRRLTDTWKM (155 aa)) is the MGS-like domain. The allosteric domain stretch occupies residues 945–1099 (NPLPTTGAIL…VRRLTDTWKM (155 aa)).

It belongs to the CarB family. In terms of assembly, composed of two chains; the small (or glutamine) chain promotes the hydrolysis of glutamine to ammonia, which is used by the large (or ammonia) chain to synthesize carbamoyl phosphate. Tetramer of heterodimers (alpha,beta)4. The cofactor is Mg(2+). Mn(2+) serves as cofactor.

The enzyme catalyses hydrogencarbonate + L-glutamine + 2 ATP + H2O = carbamoyl phosphate + L-glutamate + 2 ADP + phosphate + 2 H(+). It catalyses the reaction hydrogencarbonate + NH4(+) + 2 ATP = carbamoyl phosphate + 2 ADP + phosphate + 2 H(+). It functions in the pathway amino-acid biosynthesis; L-arginine biosynthesis; carbamoyl phosphate from bicarbonate: step 1/1. Its pathway is pyrimidine metabolism; UMP biosynthesis via de novo pathway; (S)-dihydroorotate from bicarbonate: step 1/3. Its function is as follows. Large subunit of the glutamine-dependent carbamoyl phosphate synthetase (CPSase). CPSase catalyzes the formation of carbamoyl phosphate from the ammonia moiety of glutamine, carbonate, and phosphate donated by ATP, constituting the first step of 2 biosynthetic pathways, one leading to arginine and/or urea and the other to pyrimidine nucleotides. The large subunit (synthetase) binds the substrates ammonia (free or transferred from glutamine from the small subunit), hydrogencarbonate and ATP and carries out an ATP-coupled ligase reaction, activating hydrogencarbonate by forming carboxy phosphate which reacts with ammonia to form carbamoyl phosphate. The chain is Carbamoyl phosphate synthase large chain from Thermotoga petrophila (strain ATCC BAA-488 / DSM 13995 / JCM 10881 / RKU-1).